Consider the following 485-residue polypeptide: MPQDPNTTLQMSSSKPSLSDLSVSADPVLGKADNQVRDSLALPSIEGGEEGVMRPLAWLFGLCAIQQASGATLLRNDVSTVEPLPPTQDPWYRAPPGFEKKQPGDVLRIRQAPGNLTTVVSNSSAAFHILFRTTNARSEPAWAVTTLFLPKKLYRAPSRNAALLSFQLADNSANPDSAPSLGLYWRLAQDNPMLGLRSDTSFISNLLSEGWLVNIPDQSGPEAAFGASRQAGHATIDAIRAIQHLCSLTGATGINAAIWGYSGGTFATGAAAELMPTYAPNINIVGAVLGGMVTDVSGGFDSLNRSPIAATIIATLLGVTAQFPEERAYLESRLVPETRDEFMSVLDINVFDALVHFAGRDIYAFFIDGAADIEAPILQNLFEAQSRIGFGDIPPMPMFIYKAIADEVVPIGPTDVTVQRWCDGGADITYERNTVGGHIAEIENGKPRAIQWLWSIFDESYSAQSPECRIRDVTVEVPVQVVGRV.

Residues 1-23 are disordered; sequence MPQDPNTTLQMSSSKPSLSDLSV. Residues 9–23 show a composition bias toward low complexity; sequence LQMSSSKPSLSDLSV. Catalysis depends on charge relay system residues serine 262, aspartate 406, and histidine 438.

The protein belongs to the AB hydrolase superfamily. Lipase family.

The protein operates within mycotoxin biosynthesis. Functionally, probable trichothecene esterase; part of the satratoxin SC1 cluster involved in the biosynthesis of satratoxins, trichothecene mycotoxins that are associated with human food poisonings. Satratoxins are suggested to be made by products of multiple gene clusters (SC1, SC2 and SC3) that encode 21 proteins in all, including polyketide synthases, acetyltransferases, and other enzymes expected to modify the trichothecene skeleton. SC1 encodes 10 proteins, SAT1 to SAT10. The largest are SAT8, which encodes a putative polyketide synthase (PKS) with a conventional non-reducing architecture, and SAT10, a putative protein containing four ankyrin repeats and thus may be involved in protein scaffolding. The putative short-chain reductase SAT3 may assist the PKS in some capacity. SAT6 contains a secretory lipase domain and acts probably as a trichothecene esterase. SAT5 encodes a putative acetyltransferase, and so, with SAT6, may affect endogenous protection from toxicity. The probable transcription factor SAT9 may regulate the expression of the SC1 cluster. SC2 encodes proteins SAT11 to SAT16, the largest of which encodes the putative reducing PKS SAT13. SAT11 is a cytochrome P450 monooxygenase, while SAT14 and SAT16 are probable acetyltransferases. The SC2 cluster may be regulated by the transcription factor SAT15. SC3 is a small cluster that encodes 5 proteins, SAT17 to SAT21. SAT21 is a putative MFS-type transporter which may have a role in exporting secondary metabolites. The four other proteins putatively encoded in SC3 include the taurine hydroxylase-like protein SAT17, the O-methyltransferase SAT18, the acetyltransferase SAT19, and the Cys6-type zinc finger SAT20, the latter being probably involved in regulation of SC3 expression. The chain is Probable trichothecene esterase SAT6 from Stachybotrys chartarum (strain CBS 109288 / IBT 7711) (Toxic black mold).